The sequence spans 167 residues: Shikimate kinase (167 aa).

Residue 8–15 (GFMGSGKT) participates in ATP binding.

It belongs to the shikimate kinase family.

Its subcellular location is the cytoplasm. The catalysed reaction is shikimate + ATP = 3-phosphoshikimate + ADP + H(+). It participates in metabolic intermediate biosynthesis; chorismate biosynthesis; chorismate from D-erythrose 4-phosphate and phosphoenolpyruvate: step 5/7. This Helicobacter hepaticus (strain ATCC 51449 / 3B1) protein is Shikimate kinase.